The sequence spans 358 residues: Heat-inducible transcription repressor HrcA (358 aa).

It belongs to the HrcA family.

Negative regulator of class I heat shock genes (grpE-dnaK-dnaJ and groELS operons). Prevents heat-shock induction of these operons. The polypeptide is Heat-inducible transcription repressor HrcA (Caulobacter vibrioides (strain NA1000 / CB15N) (Caulobacter crescentus)).